Reading from the N-terminus, the 215-residue chain is FGFR1 oncogene partner 2 homolog (215 aa).

The stretch at 35–183 forms a coiled coil; sequence LLNKRVEAMK…SGLRELLGIS (149 aa).

This sequence belongs to the SIKE family.

It is found in the cytoplasm. In Danio rerio (Zebrafish), this protein is FGFR1 oncogene partner 2 homolog (fgfr1op2).